The sequence spans 440 residues: Adenylosuccinate lyase (440 aa).

Residues 4-5, 67-69, and 93-94 contribute to the N(6)-(1,2-dicarboxyethyl)-AMP site; these read RY, KHD, and TS. The Proton donor/acceptor role is filled by His141. A N(6)-(1,2-dicarboxyethyl)-AMP-binding site is contributed by Gln212. Ser262 functions as the Proton donor/acceptor in the catalytic mechanism. N(6)-(1,2-dicarboxyethyl)-AMP contacts are provided by residues Ser263, 268-270, Asn276, and 307-311; these read KRN and SVERF.

It belongs to the lyase 1 family. Adenylosuccinate lyase subfamily. Homotetramer. Residues from neighboring subunits contribute catalytic and substrate-binding residues to each active site.

It catalyses the reaction N(6)-(1,2-dicarboxyethyl)-AMP = fumarate + AMP. The catalysed reaction is (2S)-2-[5-amino-1-(5-phospho-beta-D-ribosyl)imidazole-4-carboxamido]succinate = 5-amino-1-(5-phospho-beta-D-ribosyl)imidazole-4-carboxamide + fumarate. It functions in the pathway purine metabolism; AMP biosynthesis via de novo pathway; AMP from IMP: step 2/2. Its pathway is purine metabolism; IMP biosynthesis via de novo pathway; 5-amino-1-(5-phospho-D-ribosyl)imidazole-4-carboxamide from 5-amino-1-(5-phospho-D-ribosyl)imidazole-4-carboxylate: step 2/2. In terms of biological role, catalyzes two reactions in de novo purine nucleotide biosynthesis. Catalyzes the breakdown of 5-aminoimidazole- (N-succinylocarboxamide) ribotide (SAICAR or 2-[5-amino-1-(5-phospho-beta-D-ribosyl)imidazole-4-carboxamido]succinate) to 5-aminoimidazole-4-carboxamide ribotide (AICAR or 5-amino-1-(5-phospho-beta-D-ribosyl)imidazole-4-carboxamide) and fumarate, and of adenylosuccinate (ADS or N(6)-(1,2-dicarboxyethyl)-AMP) to adenosine monophosphate (AMP) and fumarate. This chain is Adenylosuccinate lyase (purB), found in Helicobacter pylori (strain ATCC 700392 / 26695) (Campylobacter pylori).